Here is a 1013-residue protein sequence, read N- to C-terminus: MGDGSDAERSGGTSSSSALELLAQYEQHIMERGRTLEAIEGHGGERLGPTYEELVEENVQLRRELQGQREEIEHLRKTISLLASGRSGATVVEQQVRPEPSPSVRELALPPRSADRRKNTKNLSLAPVGHEVPSTDRLRVSPQEATSGAQQVPLLTSSKSAEILVSKSPDEDRHLMSPRKTISRSSSSYSNTLGSPATSVLYKNSRISITSPCKSNSTSKAASVLSLPENNTSTENAPHSPHRIDNELDLLTVEPQDGSRYDTERAGGPGPLSPESIVYSDSDLQEHQPSDLSSTTRTDLGKFRDMVDTTFNAEDNPTGSRDKETGTEMEIATLQNTPSRQHESSLVTSPQASRSSITTPVVDPTNTSEPSSLSAAKFGSMSTATSSNKRSKGMGTPSVEHSAKSYSQHSGSPHSNSHQSKKADIPLFVQPEELGTIRIEVISTLYHEPGNAASILFSVVDKKSSKEMFKFAKTFTRIAEFDTFIRNNMESLAVPPLPDKHMFASNVPVKVDSRREKLNDYFASLLYLSPLPFNPALKLAQFISTDPVMNPITGEFAKEGMLLVRKSKTLGSTTTWRIRYCTVEGSIMHLHDHMIDTDTIKLTHSTIELQANLPDDKYGTKNGFILNEHKKSGLSSSTKYYFCAETPKEREQWISVLTTLCDGPGGTAAIPSINSKSEASSLFEQTSISDSSYLGPIANLEAMDATSPTRPNDPNPVSLTSEEEKEVKRRRMKSFFPFKKLATTPTPYAAGNDNASIFSQDDDSPVNATNESGISRSLQSMNLQAQYNAVFGADLRSCLQLSSHPYQGKYEIPSVVFRTLEFLYKNRGIQEEGIFRLSGSSSLIKSLQEQFDKEYDVDLCNYNDKVSVTPGNENQGGLYVDVNTVSGLLKLYLRKLPHMIFGDAAYMDFKRIVERNGDDSKLIALEFRALVNSGRIAKEYVALMYALFELLVKITENSKYNKMNLRNLCIVFSPTLNIPVNILHPFITDFGCIFQDKAPMENGPPVNIHIPQI.

Disordered stretches follow at residues 90-197 (TVVE…GSPA), 258-277 (GSRY…PESI), 282-301 (SDLQ…TDLG), and 307-421 (VDTT…HQSK). The segment covering 143-160 (QEATSGAQQVPLLTSSKS) has biased composition (polar residues). Composition is skewed to polar residues over residues 309-319 (TTFNAEDNPTG), 333-388 (TLQN…TSSN), and 404-418 (KSYS…SNSH). In terms of domain architecture, PH spans 555-662 (EFAKEGMLLV…WISVLTTLCD (108 aa)). Positions 702 to 726 (AMDATSPTRPNDPNPVSLTSEEEKE) are disordered. Polar residues predominate over residues 706–720 (TSPTRPNDPNPVSLT). The 215-residue stretch at 799–1013 (LQLSSHPYQG…PPVNIHIPQI (215 aa)) folds into the Rho-GAP domain.

It is found in the cytoplasm. Functionally, GTPase-activating protein (GAP) for CDC42 and less efficiently for RHO1. Negative regulator of the pheromone-response pathway through the STE20 protein kinase. The polypeptide is GTPase-activating protein BEM3 (BEM3) (Eremothecium gossypii (strain ATCC 10895 / CBS 109.51 / FGSC 9923 / NRRL Y-1056) (Yeast)).